A 561-amino-acid polypeptide reads, in one-letter code: uncharacterized protein (561 aa).

The stretch at 187–217 (DDEELSEEEILNRIDKLQIELEQVIGKQKNI) forms a coiled coil.

This is an uncharacterized protein from Dictyostelium discoideum (Social amoeba).